The chain runs to 502 residues: Glucose-6-phosphate isomerase (502 aa).

Residue E331 is the Proton donor of the active site. Catalysis depends on residues H362 and K471.

Belongs to the GPI family.

Its subcellular location is the cytoplasm. The enzyme catalyses alpha-D-glucose 6-phosphate = beta-D-fructose 6-phosphate. It participates in carbohydrate biosynthesis; gluconeogenesis. Its pathway is carbohydrate degradation; glycolysis; D-glyceraldehyde 3-phosphate and glycerone phosphate from D-glucose: step 2/4. Its function is as follows. Catalyzes the reversible isomerization of glucose-6-phosphate to fructose-6-phosphate. This chain is Glucose-6-phosphate isomerase, found in Xylella fastidiosa (strain M12).